The primary structure comprises 110 residues: FMRFamide-like neuropeptides 11 (110 aa).

The N-terminal stretch at 1 to 22 (MTQFSALALLLIVFVAASFAQS) is a signal peptide. Residues 23-29 (YDDVSAE) constitute a propeptide that is removed on maturation. F40 and F54 each carry phenylalanine amide. The disordered stretch occupies residues 60 to 85 (LDEEDFAPESPLQGKRNGAPQPFVRF). Position 72 is a glutamine amide (Q72). F85 bears the Phenylalanine amide mark. A propeptide spanning residues 88–110 (SGQLDHMHDLLSTLQKLKFANNK) is cleaved from the precursor.

It belongs to the FARP (FMRFamide related peptide) family. As to expression, each flp gene is expressed in a distinct set of neurons. Flp-11 is expressed in the DD, VD and DVB motor neurons, the PVC and URX interneurons, and the AUA, BAG, DA, LUA, and SAB neurons. Also expressed in head muscle, socket or sheath cells and uterine cells. Expressed exclusively in PHC sensory neurons in males. Expressed in AVK and RIS interneurons.

The protein resides in the secreted. Its function is as follows. FMRFamides and FMRFamide-like peptides are neuropeptides. Induces sleep-like quiescence behavior following release from RIS interneuron. Helps to sustain locomotion stop after gamma-aminobutyric acid (GABA) induces fast slowing response. Inhibits the late-stage body bend swimming frequency in animals through several receptors including frpr-3, npr-4 and npr-22. In terms of biological role, potent inhibitor of the activity of the dissected pharyngeal myogenic muscle system. Acts as a ligand for the npr-22 receptor in vitro. Acts as a ligand for the npr-22 receptor in vitro. This Caenorhabditis elegans protein is FMRFamide-like neuropeptides 11.